The sequence spans 388 residues: MTSVNLGMPAAPQPVLSPRRKTRQIRVGSVGVGSDSPISVQSMTTTPTTNINATLQQIAELNAAGCDIVRVACPSQDDADALPIIAKKSPIPVIADIHFQPKYVYAAIDAGCAGVRVNPGNIRKFDDQIEGISRAAEAAGVSIRIGVNAGSLDKRLLEKYGKATPEALMESAVWEASLFEQHDFHDFKISVKHNDPVTMVRAYQLLAERGDWPLHLGVTEAGPALQGTVKSATAFGILLSQGIGDTIRVSLSAPPVEEVKVGNQILQSLGLRPRKLEIVSCPSCGRAQVDVYKLAEEVNEGLAHLTVPLRVAVMGCVVNGPGEAREADLGVASGNGKGQIFVRGEVIKTVPEDQIVETLLAQANEMAESMELDENGQPVEGAPVVTAG.

A disordered region spans residues 1 to 22; sequence MTSVNLGMPAAPQPVLSPRRKT. Residues Cys-281, Cys-284, Cys-316, and Glu-323 each contribute to the [4Fe-4S] cluster site.

The protein belongs to the IspG family. [4Fe-4S] cluster is required as a cofactor.

The catalysed reaction is (2E)-4-hydroxy-3-methylbut-2-enyl diphosphate + oxidized [flavodoxin] + H2O + 2 H(+) = 2-C-methyl-D-erythritol 2,4-cyclic diphosphate + reduced [flavodoxin]. Its pathway is isoprenoid biosynthesis; isopentenyl diphosphate biosynthesis via DXP pathway; isopentenyl diphosphate from 1-deoxy-D-xylulose 5-phosphate: step 5/6. Functionally, converts 2C-methyl-D-erythritol 2,4-cyclodiphosphate (ME-2,4cPP) into 1-hydroxy-2-methyl-2-(E)-butenyl 4-diphosphate. This Kocuria rhizophila (strain ATCC 9341 / DSM 348 / NBRC 103217 / DC2201) protein is 4-hydroxy-3-methylbut-2-en-1-yl diphosphate synthase (flavodoxin).